The primary structure comprises 116 residues: Spexin (116 aa).

The first 26 residues, 1–26 (MKGPSILAVAALALLLVLSVLENSSG), serve as a signal peptide directing secretion. A propeptide spanning residues 27-35 (APQRLSEKR) is cleaved from the precursor. Gln-49 carries the glutamine amide modification. 2 consecutive propeptides follow at residues 50–116 (GHRF…RFYW) and 74–116 (PNLQ…RFYW). The span at 56 to 73 (DQSRRKELADRPPPERRN) shows a compositional bias: basic and acidic residues. Positions 56–75 (DQSRRKELADRPPPERRNPN) are disordered.

Belongs to the spexin family. As to expression, widely expressed; predominantly expressed in epithelial cells in the skin, respiratory, digestive, urinary and reproductive systems, retina, adrenal gland and various brain regions. In the adrenal gland, expressed in parenchymal cells of the cortex and in ganglionic cells and intermingled cortical cells of the medulla. Expressed in the type I glomic cells within the carotid body (at protein level). Widely expressed. Strongly expressed in esophagus, liver, pancreas, kidney, brain, hypothalamus, thyroid and ovary. Expressed in the zona glomerulosa (ZG) and zona fasciculata/reticularis (ZF/R) of the adrenal gland. Also expressed in stomach, lung, skeletal muscle, heart, uterus, spleen, adrenal gland and testis. Weakly expressed in small intestine, thymus, urinary bladder and adenohypophysis. In the brain, is expressed in the Barrington's nucleus, with lesser amount in the ventrolateral caudal periaqueductal gray (PAG) and in the mesopontine tegmentum.

It is found in the secreted. It localises to the extracellular space. The protein localises to the cytoplasmic vesicle. The protein resides in the secretory vesicle. Functionally, plays a role as a central modulator of cardiovascular and renal function and nociception. Also plays a role in energy metabolism and storage. Inhibits adrenocortical cell proliferation with minor stimulation on corticosteroid release. Its function is as follows. Acts as a ligand for galanin receptors GALR2 and GALR3. Intracerebroventricular administration of the peptide induces an increase in arterial blood pressure, a decrease in both heart rate and renal excretion and delayed natriuresis. Intraventricular administration of the peptide induces antinociceptive activity. Intraperitoneal administration of the peptide induces a reduction in food consumption and body weight. Inhibits long chain fatty acid uptake into adipocytes. Also induces contraction of muscarinic-like stomach smooth muscles. In terms of biological role, intracerebroventricular administration of the peptide induces a decrease in heart rate, but no change in arterial pressure, and an increase in urine flow rate. Intraventricular administration of the peptide induces antinociceptive activity. In Rattus norvegicus (Rat), this protein is Spexin (SPX).